A 304-amino-acid chain; its full sequence is MQEPKNSQTLHDVANGASDLEGPLAWVGMEDIALPFRLANSAVNGRASAGVSLDATSARGIHMSRLYLALEALEHEEVTLSGLGAVLQRFLASHDGLARTAFLDLSGDVLIKRPALISPRAGWKAYPCALRCRQDTQGMQAVLEVTIGYSSTCPCSAALARQSIQQAFDEDFTDMPISHEAVRTWLGSEQGILATPHSQRSQAHLSLRLADDLETLPVTALIDTVEDALGTALQTAVKRVDEQAFALANGQNLMFCEDAARRVRHALQARDEVQGFRVRIVHAESLHAHDAVAHAEWNWTPNSP.

It belongs to the GTP cyclohydrolase IV family.

It catalyses the reaction GTP + H2O = 7,8-dihydroneopterin 3'-triphosphate + formate + H(+). It functions in the pathway cofactor biosynthesis; 7,8-dihydroneopterin triphosphate biosynthesis; 7,8-dihydroneopterin triphosphate from GTP: step 1/1. In terms of biological role, converts GTP to 7,8-dihydroneopterin triphosphate. This chain is GTP cyclohydrolase FolE2, found in Chromohalobacter salexigens (strain ATCC BAA-138 / DSM 3043 / CIP 106854 / NCIMB 13768 / 1H11).